Here is a 321-residue protein sequence, read N- to C-terminus: Methionyl-tRNA formyltransferase (321 aa).

113-116 (SILP) contacts (6S)-5,6,7,8-tetrahydrofolate.

It belongs to the Fmt family.

It catalyses the reaction L-methionyl-tRNA(fMet) + (6R)-10-formyltetrahydrofolate = N-formyl-L-methionyl-tRNA(fMet) + (6S)-5,6,7,8-tetrahydrofolate + H(+). In terms of biological role, attaches a formyl group to the free amino group of methionyl-tRNA(fMet). The formyl group appears to play a dual role in the initiator identity of N-formylmethionyl-tRNA by promoting its recognition by IF2 and preventing the misappropriation of this tRNA by the elongation apparatus. In Pseudoalteromonas translucida (strain TAC 125), this protein is Methionyl-tRNA formyltransferase.